We begin with the raw amino-acid sequence, 472 residues long: Chromosomal replication initiator protein DnaA (472 aa).

The domain I, interacts with DnaA modulators stretch occupies residues 1–73; the sequence is MSNMEQDRWS…LSCWQAELPE (73 aa). Residues 73-128 form a domain II region; that stretch reads EVNRVDLTVRSPVRCAAPAKEAPAPVESRRDEQRPSAERSNGATPVSANHDALGGS. The tract at residues 89-124 is disordered; the sequence is APAKEAPAPVESRRDEQRPSAERSNGATPVSANHDA. The segment covering 99-109 has biased composition (basic and acidic residues); it reads ESRRDEQRPSA. Positions 110-119 are enriched in polar residues; that stretch reads ERSNGATPVS. The domain III, AAA+ region stretch occupies residues 129–351; it reads PLDPRLTFAS…GAINRLLAHS (223 aa). Residues G176, G178, K179, and T180 each coordinate ATP. Residues 352–472 are domain IV, binds dsDNA; the sequence is KLNNQPVTLE…VESLKRQLQE (121 aa).

This sequence belongs to the DnaA family. As to quaternary structure, oligomerizes as a right-handed, spiral filament on DNA at oriC.

Its subcellular location is the cytoplasm. Its function is as follows. Plays an essential role in the initiation and regulation of chromosomal replication. ATP-DnaA binds to the origin of replication (oriC) to initiate formation of the DNA replication initiation complex once per cell cycle. Binds the DnaA box (a 9 base pair repeat at the origin) and separates the double-stranded (ds)DNA. Forms a right-handed helical filament on oriC DNA; dsDNA binds to the exterior of the filament while single-stranded (ss)DNA is stabiized in the filament's interior. The ATP-DnaA-oriC complex binds and stabilizes one strand of the AT-rich DNA unwinding element (DUE), permitting loading of DNA polymerase. After initiation quickly degrades to an ADP-DnaA complex that is not apt for DNA replication. Binds acidic phospholipids. The protein is Chromosomal replication initiator protein DnaA of Rhodopseudomonas palustris (strain TIE-1).